The primary structure comprises 71 residues: Small ribosomal subunit protein bS21 (71 aa).

Residues 43–71 (TERKRAKASAVKRHAKKLARENARRTRLY) form a disordered region. The span at 46-59 (KRAKASAVKRHAKK) shows a compositional bias: basic residues. Residues 60 to 71 (LARENARRTRLY) show a composition bias toward basic and acidic residues.

This sequence belongs to the bacterial ribosomal protein bS21 family.

The chain is Small ribosomal subunit protein bS21 from Pectobacterium atrosepticum (strain SCRI 1043 / ATCC BAA-672) (Erwinia carotovora subsp. atroseptica).